Consider the following 462-residue polypeptide: DIMBOA UDP-glucosyltransferase BX9 (462 aa).

Residue histidine 24 is the Proton acceptor of the active site. Histidine 24 contributes to the an anthocyanidin binding site. Aspartate 115 functions as the Charge relay in the catalytic mechanism. Threonine 137, alanine 336, glutamine 338, histidine 353, tryptophan 356, asparagine 357, serine 358, and glutamate 361 together coordinate UDP-alpha-D-glucose. Residue glycine 376 coordinates an anthocyanidin. The UDP-alpha-D-glucose site is built by aspartate 377 and glutamine 378.

Belongs to the UDP-glycosyltransferase family. The cofactor is Mg(2+). Requires Ca(2+) as cofactor. As to expression, expressed at the same levels in roots and shoots.

It carries out the reaction DIMBOA + UDP-alpha-D-glucose = DIMBOA beta-D-glucoside + UDP + H(+). The enzyme catalyses DIBOA + UDP-alpha-D-glucose = DIBOA beta-D-glucoside + UDP + H(+). In terms of biological role, glucosyltransferase involved in the last step of benzoxazinoid glucoside biosynthesis. Catalyzes the glucosylation of hydroxamic acids utilizing UDP-glucose as glucose doner, reducing the toxicity of these natural insecticides for storage. Can use DIMBOA and DIBOA as substrates, HMBOA (2-hydroxy-7-methoxy-2H-1,4-benzoxazin-3(4H)-one) and HBOA (2-hydroxy-2H-1,4-benzoxazin-3(4H)-one) with a lower efficiency, but not indole acetic acid or quercitin. In Zea mays (Maize), this protein is DIMBOA UDP-glucosyltransferase BX9 (BX9).